We begin with the raw amino-acid sequence, 600 residues long: Molybdenum cofactor biosynthesis protein moc-5 (600 aa).

The tract at residues 4-371 (RAGKKLFQWS…AVNNKKARHA (368 aa)) is molybdenum cofactor biosynthesis protein A. The Radical SAM core domain occupies 68–284 (MFMREHTYLR…VDKYGDGVIR (217 aa)). Arginine 77 is a GTP binding site. Positions 84 and 88 each coordinate [4Fe-4S] cluster. Tyrosine 90 lines the S-adenosyl-L-methionine pocket. A [4Fe-4S] cluster-binding site is contributed by cysteine 91. Arginine 127 contacts GTP. Position 131 (glycine 131) interacts with S-adenosyl-L-methionine. A GTP-binding site is contributed by threonine 158. Serine 182 contributes to the S-adenosyl-L-methionine binding site. Lysine 218 contributes to the GTP binding site. Methionine 252 contributes to the S-adenosyl-L-methionine binding site. Cysteine 316 and cysteine 319 together coordinate [4Fe-4S] cluster. Residue 321–323 (RLR) coordinates GTP. Cysteine 333 contacts [4Fe-4S] cluster. Residues 369–390 (RHAVFRNGRSEEPAKSSNDSYR) are disordered. Residues 396–595 (TSASSILVHL…SGGKTTYTID (200 aa)) are molybdenum cofactor biosynthesis protein C. Aspartate 566 (for molybdenum cofactor biosynthesis protein C activity) is an active-site residue.

In the C-terminal section; belongs to the MoaC family. The protein in the N-terminal section; belongs to the radical SAM superfamily. MoaA family. Isoform a and isoform b probably form a heterooligomer. [4Fe-4S] cluster is required as a cofactor.

The enzyme catalyses GTP + AH2 + S-adenosyl-L-methionine = (8S)-3',8-cyclo-7,8-dihydroguanosine 5'-triphosphate + 5'-deoxyadenosine + L-methionine + A + H(+). It catalyses the reaction (8S)-3',8-cyclo-7,8-dihydroguanosine 5'-triphosphate = cyclic pyranopterin phosphate + diphosphate. Its pathway is cofactor biosynthesis; molybdopterin biosynthesis. In terms of biological role, probably forms a complex with isoform b that catalyzes the conversion of 5'-GTP to cyclic pyranopterin monophosphate (cPMP). Catalyzes the cyclization of GTP to (8S)-3',8-cyclo-7,8-dihydroguanosine 5'-triphosphate and mocs1b catalyzes the subsequent conversion of (8S)-3',8-cyclo-7,8-dihydroguanosine 5'-triphosphate to cPMP. Its function is as follows. Probably forms a complex with isoform a that catalyzes the conversion of 5'-GTP to cyclic pyranopterin monophosphate (cPMP). This chain is Molybdenum cofactor biosynthesis protein moc-5, found in Caenorhabditis elegans.